Here is a 208-residue protein sequence, read N- to C-terminus: Protein-L-isoaspartate O-methyltransferase (208 aa).

The active site involves serine 59.

This sequence belongs to the methyltransferase superfamily. L-isoaspartyl/D-aspartyl protein methyltransferase family.

Its subcellular location is the cytoplasm. It catalyses the reaction [protein]-L-isoaspartate + S-adenosyl-L-methionine = [protein]-L-isoaspartate alpha-methyl ester + S-adenosyl-L-homocysteine. In terms of biological role, catalyzes the methyl esterification of L-isoaspartyl residues in peptides and proteins that result from spontaneous decomposition of normal L-aspartyl and L-asparaginyl residues. It plays a role in the repair and/or degradation of damaged proteins. This is Protein-L-isoaspartate O-methyltransferase from Erwinia tasmaniensis (strain DSM 17950 / CFBP 7177 / CIP 109463 / NCPPB 4357 / Et1/99).